Reading from the N-terminus, the 475-residue chain is Ribulose bisphosphate carboxylase large chain (475 aa).

2 residues coordinate substrate: Asn-123 and Thr-173. Lys-175 (proton acceptor) is an active-site residue. Lys-177 serves as a coordination point for substrate. Residues Lys-201, Asp-203, and Glu-204 each coordinate Mg(2+). Lys-201 carries the N6-carboxylysine modification. His-294 (proton acceptor) is an active-site residue. Residues Arg-295, His-327, and Ser-379 each contribute to the substrate site.

Belongs to the RuBisCO large chain family. Type I subfamily. Heterohexadecamer of 8 large chains and 8 small chains; disulfide-linked. The disulfide link is formed within the large subunit homodimers. The cofactor is Mg(2+). In terms of processing, the disulfide bond which can form in the large chain dimeric partners within the hexadecamer appears to be associated with oxidative stress and protein turnover.

The protein resides in the plastid. Its subcellular location is the chloroplast. The catalysed reaction is 2 (2R)-3-phosphoglycerate + 2 H(+) = D-ribulose 1,5-bisphosphate + CO2 + H2O. It carries out the reaction D-ribulose 1,5-bisphosphate + O2 = 2-phosphoglycolate + (2R)-3-phosphoglycerate + 2 H(+). Its function is as follows. RuBisCO catalyzes two reactions: the carboxylation of D-ribulose 1,5-bisphosphate, the primary event in carbon dioxide fixation, as well as the oxidative fragmentation of the pentose substrate in the photorespiration process. Both reactions occur simultaneously and in competition at the same active site. In Euglena gracilis, this protein is Ribulose bisphosphate carboxylase large chain.